The chain runs to 52 residues: Keratin-associated protein 19-2 (52 aa).

It belongs to the KRTAP type 19 family. In terms of assembly, interacts with hair keratins.

Its function is as follows. In the hair cortex, hair keratin intermediate filaments are embedded in an interfilamentous matrix, consisting of hair keratin-associated proteins (KRTAP), which are essential for the formation of a rigid and resistant hair shaft through their extensive disulfide bond cross-linking with abundant cysteine residues of hair keratins. The matrix proteins include the high-sulfur and high-glycine-tyrosine keratins. The polypeptide is Keratin-associated protein 19-2 (KRTAP19-2) (Homo sapiens (Human)).